The chain runs to 1088 residues: MASRGGGQHQRHQQQQQQPGGYGRGGGGGRGRGRDGAPYSGGRGRGQDGSYPGGRGGGYGGGGGGGGPPYYGGGGGGGGGGGGQGRGYYDDGGDGRGYQRGMEGGGGRGGYRGDGDGGYGRGGGGYHGDGERGYGRGGGGGGGGGGGYRGDDEGRSSYGRARGGGGGGGGYHGDGEAGYGRGRGGRDYDGGRGGGGRRGGRGGGGSSYHQQPPPDLPQAPEPRLAAQYAREIDIAALRAQFKGLTTTTPGAASSQFPARPGFGAAGEECLVKVNHFFVGLKNDNFHHYDVAIAPDPVLKGLFRTIISKLVTERRHTDFGGRLPVYDGRANLYTAGELPFRSRELEVELSGSRKFKVAIRHVAPVSLQDLRMVMAGCPAGIPSQALQLLDIVLRDMVLAERNDMGYVAFGRSYFSPGLGSRELDKGIFAWKGFYQSCRVTQQGLSLNIDMSSTAFIEPGRVLNFVEKAIGRRITNAITVGYFLNNYGNELMRTLKGVKVEVTHRGNLRKKYRIAGFTEQSADVQTFTSSDGIKTVKEYFNKKYNLKLAFGYLPCLQVGSKERPNYLPMELCNIVPGQRYKNRLSPTQVSNLINITNDRPCDRESSIRQTVSSNQYNSTERADEFGIEVDSYPTTLKARVLKAPMLKYHDSGRVRVCTPEDGAWNMKDKKVVNGATIKSWACVNLCEGLDNRVVEAFCLQLVRTSKITGLDFANVSLPILKADPHNVKTDLPMRYQEACSWSRDNKIDLLLVVMTDDKNNASLYGDVKRICETEIGVLSQCCRAKQVYKERNVQYCANVALKINAKAGGRNSVFLNVEASLPVVSKSPTIIFGADVTHPGSFDESTPSIASVVASADWPEVTKYNSVVRMQASRKEIIQDLDSIVRELLNAFKRDSKMEPKQLIFYRDGVSEGQFQQVVESEIPEIEKAWKSLYAGKPRITFIVVQKRHHTRLFPNNYNDPRGMDGTGNVRPGTVVDTVICHPREFDFFLCSQAGIKGTSRPSHYHVLRDDNNFTADQLQSVTNNLCYLYTSCTRSVSIPPPVYYAHKLAFRARFYLTQVPVAGGDPGAAKFQWVLPEIKEEVKKSMFFC.

A disordered region spans residues 1 to 220 (MASRGGGQHQ…QPPPDLPQAP (220 aa)). Gly residues-rich tracts occupy residues 20-30 (GGYGRGGGGGR), 51-86 (YPGG…GQGR), 95-127 (GRGY…GGYH), 135-148 (GRGG…GGGY), 161-182 (ARGG…YGRG), and 191-206 (GRGG…GGGS). A compositionally biased stretch (pro residues) spans 211–220 (QPPPDLPQAP). The PAZ domain maps to 477–574 (TVGYFLNNYG…LPMELCNIVP (98 aa)). The Piwi domain maps to 747-1056 (LLLVVMTDDK…LAFRARFYLT (310 aa)).

The protein belongs to the argonaute family. Ago subfamily.

Its function is as follows. Probably involved in the RNA silencing pathway. May bind to short RNAs such as microRNAs (miRNAs) or short interfering RNAs (siRNAs), and represses the translation of mRNAs which are complementary to them. This is Protein argonaute 18 (AGO18) from Oryza sativa subsp. japonica (Rice).